The following is a 513-amino-acid chain: ATP synthase subunit alpha (513 aa).

Gly-169–Thr-176 provides a ligand contact to ATP.

It belongs to the ATPase alpha/beta chains family. In terms of assembly, F-type ATPases have 2 components, CF(1) - the catalytic core - and CF(0) - the membrane proton channel. CF(1) has five subunits: alpha(3), beta(3), gamma(1), delta(1), epsilon(1). CF(0) has three main subunits: a(1), b(2) and c(9-12). The alpha and beta chains form an alternating ring which encloses part of the gamma chain. CF(1) is attached to CF(0) by a central stalk formed by the gamma and epsilon chains, while a peripheral stalk is formed by the delta and b chains.

The protein localises to the cell inner membrane. It catalyses the reaction ATP + H2O + 4 H(+)(in) = ADP + phosphate + 5 H(+)(out). Functionally, produces ATP from ADP in the presence of a proton gradient across the membrane. The alpha chain is a regulatory subunit. This is ATP synthase subunit alpha from Yersinia enterocolitica serotype O:8 / biotype 1B (strain NCTC 13174 / 8081).